The primary structure comprises 887 residues: Integrator complex subunit 6 (887 aa).

In terms of domain architecture, VWFA spans 3-227; that stretch reads ILLFLIDTSA…QCLESLVQKV (225 aa). Residues 626-633 carry the Inhibitory loop motif; it reads MMIDEADE. S804 carries the phosphoserine modification.

This sequence belongs to the Integrator subunit 6 family. As to quaternary structure, component of the Integrator complex, composed of core subunits INTS1, INTS2, INTS3, INTS4, INTS5, INTS6, INTS7, INTS8, INTS9/RC74, INTS10, INTS11/CPSF3L, INTS12, INTS13, INTS14 and INTS15. The core complex associates with protein phosphatase 2A subunits PPP2CA and PPP2R1A, to form the Integrator-PP2A (INTAC) complex. As to expression, widely expressed. Expressed in heart, brain, placenta, lung, liver, skeletal muscle, kidney and pancreas.

Its subcellular location is the nucleus. The protein localises to the chromosome. Component of the integrator complex, a multiprotein complex that terminates RNA polymerase II (Pol II) transcription in the promoter-proximal region of genes. The integrator complex provides a quality checkpoint during transcription elongation by driving premature transcription termination of transcripts that are unfavorably configured for transcriptional elongation: the complex terminates transcription by (1) catalyzing dephosphorylation of the C-terminal domain (CTD) of Pol II subunit POLR2A and SUPT5H/SPT5, (2) degrading the exiting nascent RNA transcript via endonuclease activity and (3) promoting the release of Pol II from bound DNA. The integrator complex is also involved in terminating the synthesis of non-coding Pol II transcripts, such as enhancer RNAs (eRNAs), small nuclear RNAs (snRNAs), telomerase RNAs and long non-coding RNAs (lncRNAs). Within the integrator complex, INTS6 acts as a molecular adapter that promotes assembly of protein phosphatase 2A (PP2A) subunits to the integrator core complex, promoting recruitment of PP2A to transcription pause-release checkpoint. Mediates recruitment of cytoplasmic dynein to the nuclear envelope, probably as component of the integrator complex. May have a tumor suppressor role; an ectopic expression suppressing tumor cell growth. This Homo sapiens (Human) protein is Integrator complex subunit 6.